A 777-amino-acid chain; its full sequence is Isoamylase (777 aa).

Residues 1-32 (MDPHAPQRQRSGQRLRALALAALACALSPAHA) form the signal peptide. Ca(2+)-binding residues include Asp162, Glu263, Thr264, Asn266, and Asp293. The active-site Nucleophile is Asp410. Cys419 and Cys423 are oxidised to a cystine. Residue Glu458 is the Proton donor of the active site.

Belongs to the glycosyl hydrolase 13 family. In terms of assembly, monomer. It depends on Ca(2+) as a cofactor.

It carries out the reaction Hydrolysis of (1-&gt;6)-alpha-D-glucosidic branch linkages in glycogen, amylopectin and their beta-limit dextrins.. Has a high rate of hydrolysis for glycogen. Does not cleave pullulan. The protein is Isoamylase (iam) of Flavobacterium sp.